Reading from the N-terminus, the 543-residue chain is Glutamyl-tRNA(Gln) amidotransferase subunit B-1, chloroplastic/mitochondrial (543 aa).

A disordered region spans residues 1–47; that stretch reads MIRAGGPSPSPRGRRAGPIRLPRRAPSSTPTRAKTEEKASADASSRT. Residues 12-23 are compositionally biased toward basic residues; sequence RGRRAGPIRLPR.

This sequence belongs to the GatB/GatE family. GatB subfamily. Subunit of the heterotrimeric GatCAB amidotransferase (AdT) complex, composed of A, B and C subunits.

It localises to the mitochondrion. It is found in the plastid. The protein localises to the chloroplast. It carries out the reaction L-glutamyl-tRNA(Gln) + L-glutamine + ATP + H2O = L-glutaminyl-tRNA(Gln) + L-glutamate + ADP + phosphate + H(+). Allows the formation of correctly charged Gln-tRNA(Gln) through the transamidation of misacylated Glu-tRNA(Gln) in chloroplasts and mitochondria. The reaction takes place in the presence of glutamine and ATP through an activated gamma-phospho-Glu-tRNA(Gln). The protein is Glutamyl-tRNA(Gln) amidotransferase subunit B-1, chloroplastic/mitochondrial of Micromonas commoda (strain RCC299 / NOUM17 / CCMP2709) (Picoplanktonic green alga).